Reading from the N-terminus, the 1406-residue chain is DNA-directed RNA polymerase subunit beta' (1406 aa).

Residues cysteine 70, cysteine 72, cysteine 85, and cysteine 88 each coordinate Zn(2+). 3 residues coordinate Mg(2+): aspartate 460, aspartate 462, and aspartate 464. Zn(2+) is bound by residues cysteine 814, cysteine 889, cysteine 896, and cysteine 899.

This sequence belongs to the RNA polymerase beta' chain family. As to quaternary structure, the RNAP catalytic core consists of 2 alpha, 1 beta, 1 beta' and 1 omega subunit. When a sigma factor is associated with the core the holoenzyme is formed, which can initiate transcription. It depends on Mg(2+) as a cofactor. Zn(2+) serves as cofactor.

It carries out the reaction RNA(n) + a ribonucleoside 5'-triphosphate = RNA(n+1) + diphosphate. Its function is as follows. DNA-dependent RNA polymerase catalyzes the transcription of DNA into RNA using the four ribonucleoside triphosphates as substrates. This is DNA-directed RNA polymerase subunit beta' from Stenotrophomonas maltophilia (strain K279a).